Reading from the N-terminus, the 62-residue chain is Large ribosomal subunit protein bL28 (62 aa).

The protein belongs to the bacterial ribosomal protein bL28 family.

This Thermoanaerobacter sp. (strain X514) protein is Large ribosomal subunit protein bL28.